Here is a 446-residue protein sequence, read N- to C-terminus: Glutamine synthetase (446 aa).

Residues 18–103 (ENVRYLRLQF…LICDVYKTDG (86 aa)) form the GS beta-grasp domain. Residues 110 to 446 (PRANLKRVLK…WERDQYMKQY (337 aa)) form the GS catalytic domain. The Mg(2+) site is built by glutamate 134 and glutamate 136. An ATP-binding site is contributed by glutamate 186. Glutamate 191 and glutamate 198 together coordinate Mg(2+). L-glutamate-binding positions include 242 to 243 (NG) and glycine 243. Histidine 247 is a binding site for Mg(2+). Residue serine 251 coordinates ATP. L-glutamate is bound by residues arginine 300, glutamate 306, and arginine 318. Residues arginine 318 and arginine 323 each contribute to the ATP site. Residue glutamate 335 coordinates Mg(2+). L-glutamate is bound at residue arginine 337.

The protein belongs to the glutamine synthetase family. In terms of assembly, oligomer of 12 subunits arranged in the form of two hexagons. In its feedback-inhibited form, interacts with TnrA in order to block its DNA-binding activity. Mg(2+) serves as cofactor.

It is found in the cytoplasm. It carries out the reaction L-glutamate + NH4(+) + ATP = L-glutamine + ADP + phosphate + H(+). With respect to regulation, inhibited by glutamine. Functionally, glutamine synthetase (GS) is an unusual multitasking protein that functions as an enzyme, a transcription coregulator, and a chaperone in ammonium assimilation and in the regulation of genes involved in nitrogen metabolism. It catalyzes the ATP-dependent biosynthesis of glutamine from glutamate and ammonia. Feedback-inhibited GlnA also interacts with and regulates the activity of the transcriptional regulator TnrA. During nitrogen limitation, TnrA is in its DNA-binding active state and turns on the transcription of genes required for nitrogen assimilation. Under conditions of nitrogen excess, feedback-inhibited GlnA forms a stable complex with TnrA, which inhibits its DNA-binding activity. In contrast, feedback-inhibited GlnA acts as a chaperone to stabilize the DNA-binding activity of GlnR, which represses the transcription of nitrogen assimilation genes. The polypeptide is Glutamine synthetase (Staphylococcus aureus (strain N315)).